Here is a 167-residue protein sequence, read N- to C-terminus: Ureidoglycolate lyase (167 aa).

This sequence belongs to the ureidoglycolate lyase family. As to quaternary structure, homodimer. The cofactor is Ni(2+).

The enzyme catalyses (S)-ureidoglycolate = urea + glyoxylate. Its pathway is nitrogen metabolism; (S)-allantoin degradation. In terms of biological role, catalyzes the catabolism of the allantoin degradation intermediate (S)-ureidoglycolate, generating urea and glyoxylate. Involved in the utilization of allantoin as nitrogen source. This chain is Ureidoglycolate lyase, found in Pseudomonas putida (strain W619).